A 71-amino-acid chain; its full sequence is Protein SlyX homolog (71 aa).

This sequence belongs to the SlyX family.

This is Protein SlyX homolog from Rhodopseudomonas palustris (strain BisB5).